A 644-amino-acid chain; its full sequence is MKTTIKNSRTQESVSYEGNETKKGTGETLSYETSKDIEVPERLIDQIIGQEEAVETIKKAAEQRRNVLLIGEPGVGKSMLAKAMAELLPREQLQDILVYPNIEDPNNPLIGAVPAGEGRKIVMNHKNKARSQDEKKNLFMMLIISFILVLGFMMNQFLAAIIAAGIIFLALQQFRPRTTVMVPKLLVNNEGRQVAPFVDATGAHAGALLGDVRHDPYQSGGLGTPAHERVEAGMIHKANKGVLYIDEIGTMKMKTQQELLTAMQEKRYSITGQSETSSGAMVRSQAVPCDFVLVASGNLQVLEGMHPALRSRIRGYGYEVFMKDTMPDTPENRDKLVQFVAQEVEKDGRIPHFSREAVEEIIREAQRRAGKKDSLTLKLRELGGLVRAAGDIAKSRGAELVETEDVIEAKKLSRTLEQQIADRYIVQKKKYSVFKSEGGEVGRVNGLAIIGDRSGIILPIAAEAAPAQSKEEGRIIATGKLGEIAREAVQNVSALIKKYTGTDISNYDIHIQFLQAYDGVEGDSASVSVATAVISALEEIPVDQSVALTGSLSIRGDVLPVGGVTGKIEAAAEAGIRKVLIPASNMGDVMIEKKYEDMVEIVPVETLGDVLEHALIGKGKESLIQRMQKISDIVPSIMKKPAMH.

A compositionally biased stretch (polar residues) spans 1–18; the sequence is MKTTIKNSRTQESVSYEG. Residues 1–30 form a disordered region; sequence MKTTIKNSRTQESVSYEGNETKKGTGETLS. Residues 1–137 lie on the Cytoplasmic side of the membrane; sequence MKTTIKNSRT…KARSQDEKKN (137 aa). 71 to 78 contributes to the ATP binding site; it reads GEPGVGKS. The next 2 membrane-spanning stretches (helical) occupy residues 138-155 and 156-171; these read LFMMLIISFILVLGFMMN and QFLAAIIAAGIIFLAL. The Cytoplasmic segment spans residues 172 to 644; that stretch reads QQFRPRTTVM…PSIMKKPAMH (473 aa). Residues 438 to 617 enclose the Lon proteolytic domain; that stretch reads GGEVGRVNGL…GDVLEHALIG (180 aa). Catalysis depends on residues serine 524 and lysine 567.

It belongs to the peptidase S16 family. Archaeal LonB subfamily. As to quaternary structure, homohexamer. Organized in a ring with a central cavity.

The protein resides in the cell membrane. In terms of biological role, ATP-dependent serine protease that mediates the selective degradation of mutant and abnormal proteins as well as certain short-lived regulatory proteins. Degrades polypeptides processively. The chain is Archaeal Lon protease from Methanothermobacter thermautotrophicus (strain ATCC 29096 / DSM 1053 / JCM 10044 / NBRC 100330 / Delta H) (Methanobacterium thermoautotrophicum).